Consider the following 325-residue polypeptide: Apoptosis-enhancing nuclease (325 aa).

A Nucleolar localization signal motif is present at residues 27 to 35; the sequence is RKRHKRRSR. Residues 53–105 are disordered; the sequence is LSMPPEPGSSPLPTPFGAVTATEDASSGKQCPRAGSGGAPCSRRPAPGKASGP. Residues 56-66 show a composition bias toward pro residues; the sequence is PPEPGSSPLPT. In terms of domain architecture, Exonuclease spans 110 to 266; sequence CVAIDCEMVG…EDATTAMELY (157 aa). The Nuclear localization signal motif lies at 165–188; sequence RQHMCKAIPFQVAQKEILKLLKGK. The disordered stretch occupies residues 281–325; the sequence is LWTCPEDREPDSSTDMEQYMEDQYWPDDLAHGSRGGAREAQDRRN. The segment covering 308–325 has biased composition (basic and acidic residues); that stretch reads DLAHGSRGGAREAQDRRN.

The protein resides in the nucleus. The protein localises to the nucleolus. Its function is as follows. Exonuclease with activity against single- and double-stranded DNA and RNA. Mediates p53-induced apoptosis. When induced by p53 following DNA damage, digests double-stranded DNA to form single-stranded DNA and amplifies DNA damage signals, leading to enhancement of apoptosis. The sequence is that of Apoptosis-enhancing nuclease (AEN) from Pongo abelii (Sumatran orangutan).